Here is a 1197-residue protein sequence, read N- to C-terminus: Protein timeless homolog (1197 aa).

A required for homodimerization and for interaction with CRY1 and CHEK1 region spans residues 1 to 309 (MDLYMMNCEL…GLHNLQNYSS (309 aa)). At S281 the chain carries Phosphoserine. Disordered stretches follow at residues 647–674 (STPL…EELQ) and 943–1002 (RKKL…SAEN). The segment covering 656-673 (PEEGDAEEEEEEEEEEEL) has biased composition (acidic residues). The tract at residues 810 to 949 (SHRAPLWSPE…KKRRKKLAPS (140 aa)) is DNA-binding domain. Positions 963 to 985 (QEDPEEEDEHLPEDESEDEESEE) are enriched in acidic residues. Over residues 986 to 999 (GLPSGQGQGSSSLS) the composition is skewed to low complexity. Residues 997 to 1095 (SLSAENLGES…TQLRRVAASL (99 aa)) are interaction with PARP1. S1071 and S1084 each carry phosphoserine. The interval 1079–1197 (IPAKLSSTQL…KRFQIEDEDD (119 aa)) is required for nuclear localization. Residue T1086 is modified to Phosphothreonine. A disordered region spans residues 1088–1197 (LRRVAASLSQ…KRFQIEDEDD (110 aa)). 2 stretches are compositionally biased toward acidic residues: residues 1099 to 1109 (ENEEEREEEPE) and 1143 to 1153 (TEEEATGEEEW). The residue at position 1165 (S1165) is a Phosphoserine.

It belongs to the timeless family. In terms of assembly, monomer. Homodimer or homomultimer. Component of the circadian core oscillator, which includes the CRY proteins, CLOCK or NPAS2, ARTNL/BMAL1 or ARTNL2/BMAL2, CSKN1D and/or CSNK1E, TIMELESS, and the PER proteins. Interacts directly with PER2; the interaction with PER2 is via its second PAS domain. Interacts directly with PER1 and PER3. Interacts with CRY1. Interacts with CRY2. Interacts with CHEK1, ATR and ATRIP. Interacts with CLSPN. Interacts (via N-terminus) with TIPIN. The TIMELESS-TIPIN heterodimer binds preferably to guanine-rich quadruplex-forming (G4) DNA structures. Associates with the MCM2-7 complex. Interacts with DNA polymerases alpha, delta and epsilon. Interacts with DDX11; this interaction increases recruitment of both proteins onto chromatin in response to replication stress induction by hydroxyurea. Interacts with PARP1; interaction is direct and independent of poly-ADP-ribose. Predominantly and robustly expressed in proliferative organs (spleen, thymus, intestine and testis) compared to those more differentiated such as kidney and liver (at protein level). Expressed in all tissues examined including brain, heart, lung, liver, skeletal muscle, kidney, placenta, pancreas, spleen, thymus and testis. Strongly expressed in the suprachiasmatic nucleus (SCN) and pars tuberalis, moderately in the cingulate cortex, pyrimidal cell layer of the piriform cortex, periventricular part of the caudate putamen, and granular layer of the cerebellum, and weakly in the cerebral cortex, gyrus dentatus, hippocampus and thalamic nuclei. In embryonic kidney, expression is highest in regions of active ureteric bud cell branching.

Its subcellular location is the nucleus. It is found in the chromosome. Plays an important role in the control of DNA replication, maintenance of replication fork stability, maintenance of genome stability throughout normal DNA replication, DNA repair and in the regulation of the circadian clock. Required to stabilize replication forks during DNA replication by forming a complex with TIPIN: this complex regulates DNA replication processes under both normal and stress conditions, stabilizes replication forks and influences both CHEK1 phosphorylation and the intra-S phase checkpoint in response to genotoxic stress. During DNA replication, inhibits the CMG complex ATPase activity and activates DNA polymerases catalytic activities, coupling DNA unwinding and DNA synthesis. TIMELESS promotes TIPIN nuclear localization. Plays a role in maintaining processive DNA replication past genomic guanine-rich DNA sequences that form G-quadruplex (G4) structures, possibly together with DDX1. Involved in cell survival after DNA damage or replication stress by promoting DNA repair. In response to double-strand breaks (DSBs), accumulates at DNA damage sites and promotes homologous recombination repair via its interaction with PARP1. May be specifically required for the ATR-CHEK1 pathway in the replication checkpoint induced by hydroxyurea or ultraviolet light. Involved in the determination of period length and in the DNA damage-dependent phase advancing of the circadian clock. Negatively regulates CLOCK|NPAS2-ARTNL/BMAL1|ARTNL2/BMAL2-induced transactivation of PER1 possibly via translocation of PER1 into the nucleus. May also play an important role in epithelial cell morphogenesis and formation of branching tubules. The chain is Protein timeless homolog from Mus musculus (Mouse).